The sequence spans 742 residues: Phosphoribosylformylglycinamidine synthase subunit PurL (742 aa).

Residue His-53 is part of the active site. Residues Tyr-56 and Lys-95 each coordinate ATP. Glu-97 lines the Mg(2+) pocket. Substrate is bound by residues 98–101 (SHNH) and Arg-120. The active-site Proton acceptor is the His-99. Residue Asp-121 coordinates Mg(2+). Residue Gln-245 participates in substrate binding. Residue Asp-275 participates in Mg(2+) binding. 319 to 321 (ESQ) serves as a coordination point for substrate. ATP-binding residues include Asp-502 and Gly-539. Asn-540 serves as a coordination point for Mg(2+). Ser-542 serves as a coordination point for substrate.

The protein belongs to the FGAMS family. Monomer. Part of the FGAM synthase complex composed of 1 PurL, 1 PurQ and 2 PurS subunits.

It is found in the cytoplasm. The catalysed reaction is N(2)-formyl-N(1)-(5-phospho-beta-D-ribosyl)glycinamide + L-glutamine + ATP + H2O = 2-formamido-N(1)-(5-O-phospho-beta-D-ribosyl)acetamidine + L-glutamate + ADP + phosphate + H(+). It participates in purine metabolism; IMP biosynthesis via de novo pathway; 5-amino-1-(5-phospho-D-ribosyl)imidazole from N(2)-formyl-N(1)-(5-phospho-D-ribosyl)glycinamide: step 1/2. Its function is as follows. Part of the phosphoribosylformylglycinamidine synthase complex involved in the purines biosynthetic pathway. Catalyzes the ATP-dependent conversion of formylglycinamide ribonucleotide (FGAR) and glutamine to yield formylglycinamidine ribonucleotide (FGAM) and glutamate. The FGAM synthase complex is composed of three subunits. PurQ produces an ammonia molecule by converting glutamine to glutamate. PurL transfers the ammonia molecule to FGAR to form FGAM in an ATP-dependent manner. PurS interacts with PurQ and PurL and is thought to assist in the transfer of the ammonia molecule from PurQ to PurL. This Lactobacillus acidophilus (strain ATCC 700396 / NCK56 / N2 / NCFM) protein is Phosphoribosylformylglycinamidine synthase subunit PurL.